A 119-amino-acid polypeptide reads, in one-letter code: Probable non-functional T cell receptor gamma variable 10 (119 aa).

An N-terminal signal peptide occupies residues 1 to 19 (MSLLEAFAFSSWALGLGLS). One can recognise an Ig-like domain in the interval 24 to 119 (FQLSISTEVK…MAVYYCAAWD (96 aa)). Cysteine 40 and cysteine 115 are oxidised to a cystine.

Gamma-delta TR is a heterodimer composed of a gamma and delta chain; disulfide-linked. The gamma-delta TR is associated with the transmembrane signaling CD3 coreceptor proteins following the stoichiometry: a single gamma-delta TR heterodimer associates with one CD3D-CD3E heterodimer, one CD3G-CD3E heterodimer and one CD247 homodimer forming a stable octameric structure. Upon activation, gamma-delta TR complex associates with FCER1G to initiate intracellular signaling.

The protein localises to the cell membrane. Its function is as follows. Probable non-functional open reading frame (ORF) of V region of the variable domain of T cell receptor (TR) gamma chain. Non-functional ORF generally cannot participate in the synthesis of a productive T cell receptor (TR) chain due to altered V-(D)-J or switch recombination and/or splicing site (at mRNA level) and/or conserved amino acid change (protein level). Gamma-delta TRs recognize a variety of self and foreign non-peptide antigens frequently expressed at the epithelial boundaries between the host and external environment, including endogenous lipids presented by MH-like protein CD1D and phosphoantigens presented by butyrophilin-like molecule BTN3A1. Upon antigen recognition induces rapid, innate-like immune responses involved in pathogen clearance and tissue repair. Binding of gamma-delta TR complex to antigen triggers phosphorylation of immunoreceptor tyrosine-based activation motifs (ITAMs) in the CD3 chains by the LCK and FYN kinases, allowing the recruitment, phosphorylation, and activation of ZAP70 that facilitates phosphorylation of the scaffolding proteins LCP2 and LAT. This lead to the formation of a supramolecular signalosome that recruits the phospholipase PLCG1, resulting in calcium mobilization and ERK activation, ultimately leading to T cell expansion and differentiation into effector cells. Gamma-delta TRs are produced through somatic rearrangement of a limited repertoire of variable (V), diversity (D), and joining (J) genes. The potential diversity of gamma-delta TRs is conferred by the unique ability to rearrange (D) genes in tandem and to utilize all three reading frames. The combinatorial diversity is considerably increased by the sequence exonuclease trimming and random nucleotide (N) region additions which occur during the V-(D)-J rearrangements. The protein is Probable non-functional T cell receptor gamma variable 10 of Homo sapiens (Human).